We begin with the raw amino-acid sequence, 168 residues long: Endoribonuclease YbeY (168 aa).

Zn(2+) is bound by residues His132, His136, and His142.

The protein belongs to the endoribonuclease YbeY family. It depends on Zn(2+) as a cofactor.

The protein resides in the cytoplasm. In terms of biological role, single strand-specific metallo-endoribonuclease involved in late-stage 70S ribosome quality control and in maturation of the 3' terminus of the 16S rRNA. This Clostridium perfringens (strain ATCC 13124 / DSM 756 / JCM 1290 / NCIMB 6125 / NCTC 8237 / Type A) protein is Endoribonuclease YbeY.